An 848-amino-acid chain; its full sequence is Beta-galactosidase 13 (848 aa).

Positions 1 to 27 (MKIHSSDHSWLLLAVLVILLSFSGALS) are cleaved as a signal peptide. Residue Asn-107 is glycosylated (N-linked (GlcNAc...) asparagine). The active-site Proton donor is Glu-200. Catalysis depends on Glu-271, which acts as the Nucleophile. N-linked (GlcNAc...) asparagine glycosylation is found at Asn-272, Asn-303, Asn-376, Asn-398, Asn-782, Asn-787, and Asn-817. Positions 754-843 (DDVHLTANLK…KKLAVQVKCG (90 aa)) constitute an SUEL-type lectin domain.

Belongs to the glycosyl hydrolase 35 family. As to expression, ubiquitous, with higher expression levels in roots, flowers and siliques.

It is found in the secreted. It localises to the extracellular space. Its subcellular location is the apoplast. The enzyme catalyses Hydrolysis of terminal non-reducing beta-D-galactose residues in beta-D-galactosides.. The polypeptide is Beta-galactosidase 13 (BGAL13) (Arabidopsis thaliana (Mouse-ear cress)).